The following is a 458-amino-acid chain: uncharacterized protein (458 aa).

The span at 1-10 (MQAEPKKSQA) shows a compositional bias: basic and acidic residues. The tract at residues 1–20 (MQAEPKKSQAEQRAVAEPVS) is disordered. The 62-residue stretch at 23–84 (VSLVGEEYEV…ARFLRADAVE (62 aa)) folds into the TRAM domain. [4Fe-4S] cluster is bound by residues Cys-97, Cys-105, Cys-108, and Cys-193. S-adenosyl-L-methionine-binding residues include Gln-287, Tyr-316, Glu-340, and Asp-384. Catalysis depends on Cys-411, which acts as the Nucleophile.

The protein belongs to the class I-like SAM-binding methyltransferase superfamily. RNA M5U methyltransferase family.

This is an uncharacterized protein from Streptomyces coelicolor (strain ATCC BAA-471 / A3(2) / M145).